The following is a 56-amino-acid chain: Large ribosomal subunit protein bL33 (56 aa).

This sequence belongs to the bacterial ribosomal protein bL33 family.

The polypeptide is Large ribosomal subunit protein bL33 (Anaplasma phagocytophilum (strain HZ)).